Reading from the N-terminus, the 248-residue chain is Probable transcriptional regulatory protein Syncc9902_0542 (248 aa).

Belongs to the TACO1 family.

The protein resides in the cytoplasm. The sequence is that of Probable transcriptional regulatory protein Syncc9902_0542 from Synechococcus sp. (strain CC9902).